The chain runs to 1895 residues: Probable WRKY transcription factor 19 (1895 aa).

A disordered region spans residues 1-85 (MSEKEELPLT…SGSGLSQQLN (85 aa)). The segment covering 10–22 (TLTSIGAATATSD) has biased composition (polar residues). A compositionally biased stretch (low complexity) spans 28–39 (GSSGEGISSSSS). The span at 46 to 62 (MQNSPTGLMISQSSSMC) shows a compositional bias: polar residues. The segment covering 75-85 (SSGSGLSQQLN) has biased composition (low complexity). One can recognise a PAH domain in the interval 291–371 (RPLTIDGGGN…LGFNTYLSKE (81 aa)). A compositionally biased stretch (polar residues) spans 408–417 (ANMQPQTEYP). Disordered stretches follow at residues 408 to 442 (ANMQ…SSLL), 517 to 538 (YKDR…TYLS), and 580 to 620 (EASD…ADAS). Low complexity predominate over residues 418-427 (SSSAVQSFSS). Over residues 428 to 442 (GQPQIPTSAPDSSLL) the composition is skewed to polar residues. The WRKY 1 DNA-binding region spans 462-526 (NVDKQVNDGY…YKDRHNHEPP (65 aa)). A DNA-binding region (WRKY 2) is located at residues 635-700 (SEVDNLDDGY…SLCRRGISVY (66 aa)). Residues 666 to 808 (KDYDVVIRYG…EIVRDALKVL (143 aa)) enclose the TIR domain. The NB-ARC domain occupies 800–1087 (IVRDALKVLC…LDGCGFSAHV (288 aa)). Residue 844-851 (GTVGIGKT) coordinates ATP. LRR repeat units follow at residues 1206–1227 (KLRL…FNPE), 1228–1249 (NLVE…KKAR), 1259–1281 (KLKK…SSAT), 1282–1304 (NLEH…ISYL), 1306–1328 (KLVF…VDLE), 1329–1351 (SLEV…SPNV), 1352–1371 (KELY…IKNL), 1373–1395 (LLEK…IYKL), 1397–1419 (HLET…SRRM), and 1421–1442 (CLRF…ISYL). The tract at residues 1562–1583 (ETVAPPSSSSEAREEEVETEET) is disordered. The Protein kinase domain maps to 1626-1877 (WQKGQLLGRG…AAELLNHPFV (252 aa)). Residues 1632–1640 (LGRGSLGSV) and K1654 each bind ATP. Residue D1758 is part of the active site.

Belongs to the disease resistance X-TIR-NB-LRR-X family.

The protein localises to the nucleus. Functionally, transcription factor. Interacts specifically with the W box (5'-(T)TGAC[CT]-3'), a frequently occurring elicitor-responsive cis-acting element. May act also as a disease resistance protein with a serine/threonine-protein kinase activity. The chain is Probable WRKY transcription factor 19 (WRKY19) from Arabidopsis thaliana (Mouse-ear cress).